The following is a 351-amino-acid chain: Short-chain dehydrogenase sdnK (351 aa).

Residues isoleucine 46, threonine 66, glutamate 98, tyrosine 224, lysine 228, and threonine 268 each coordinate NADP(+). The active-site Proton donor is the tyrosine 224. Lysine 228 functions as the Lowers pKa of active site Tyr in the catalytic mechanism.

The protein belongs to the short-chain dehydrogenases/reductases (SDR) family.

The protein operates within antibiotic biosynthesis. Its function is as follows. Short-chain dehydrogenase; part of the gene cluster that mediates the biosynthesis of sordarin and hypoxysordarin, glycoside antibiotics with a unique tetracyclic diterpene aglycone structure. First, the geranylgeranyl diphosphate synthase sdnC constructs GGDP from farnesyl diphosphate and isopentenyl diphosphate. The diterpene cyclase sdnA then catalyzes the cyclization of GGDP to afford cycloaraneosene. Cycloaraneosene is then hydroxylated four times by the putative cytochrome P450 monooxygenases sdnB, sdnE, sdnF and sdnH to give a hydroxylated cycloaraneosene derivative such as cycloaraneosene-8,9,13,19-tetraol. Although the order of the hydroxylations is unclear, at least C8, C9 and C13 of the cycloaraneosene skeleton are hydroxylated before the sordaricin formation. Dehydration of the 13-hydroxy group of the hydroxylated cycloaraneosene derivative might be catalyzed by an unassigned hypothetical protein such as sdnG and sdnP to construct the cyclopentadiene moiety. The FAD-dependent oxidoreductase sdnN is proposed to catalyze the oxidation at C9 of the hydroxylated cycloaraneosene derivative and also catalyze the Baeyer-Villiger oxidation to give the lactone intermediate. The presumed lactone intermediate would be hydrolyzed to give an acrolein moiety and a carboxylate moiety. Then, [4+2]cycloaddition would occur between the acrolein moiety and the cyclopentadiene moiety to give sordaricin. SdnN might also be involved in the [4+2]cycloaddition after the hypothesized oxidation to accommodate the oxidized product and prompt the [4+2]cycloaddition. GDP-6-deoxy-D-altrose may be biosynthesized from GDP-D-mannose by the putative GDP-mannose-4,6-dehydratase sdnI and the short-chain dehydrogenase sdnK. The glycosyltransferase sdnJ catalyzes the attachment of 6-deoxy-D-altrose onto the 19-hydroxy group of sordaricin to give 4'-O-demethylsordarin. The methyltransferase sdnD would complete the biosynthesis of sordarin. Sordarin can be further modified into hypoxysordarin. The unique acyl chain at the 3'-hydroxy group of hypoxysordarin would be constructed by an iterative type I PKS sdnO and the trans-acting polyketide methyltransferase sdnL. SdnL would be responsible for the introduction of an alpha-methyl group of the polyketide chain. Alternatively, the beta-lactamase-like protein sdnR might be responsible for the cleavage and transfer of the polyketide chain from the PKS sdnO to sordarin. Two putative cytochrome P450 monooxygenases, sdnQ and sdnT, might catalyze the epoxidations of the polyketide chain to complete the biosynthesis of hypoxysordarin. Transcriptional regulators sdnM and sdnS are presumably encoded for the transcriptional regulation of the expression of the sdn gene cluster. In Sordaria araneosa (Pleurage araneosa), this protein is Short-chain dehydrogenase sdnK.